A 417-amino-acid polypeptide reads, in one-letter code: Phosphoglycerate kinase (417 aa).

Residues Val-23, Asp-24, Phe-25, Asn-26, Gln-39, Arg-40, Ser-63, His-64, Gly-66, Arg-67, Leu-122, Arg-123, His-170, and Arg-171 each coordinate (2R)-3-phosphoglycerate. Residue Gly-214 coordinates ADP. Residue Gly-214 participates in CDP binding. 2 residues coordinate AMP: Ala-215 and Lys-216. Position 215 (Ala-215) interacts with ATP. Ala-215 is a binding site for Mg(2+). CDP is bound at residue Asp-219. Asp-219 contacts Mg(2+). AMP is bound at residue Lys-220. Lys-220 is an ATP binding site. Gly-238 contributes to the ADP binding site. Gly-238 is a CDP binding site. The AMP site is built by Gly-239 and Gly-313. ATP contacts are provided by Gly-239 and Gly-313. CDP-binding residues include Gly-338 and Phe-343. Residue Phe-343 coordinates ADP. Glu-344 is an AMP binding site. Positions 344, 375, and 376 each coordinate ATP. Asp-375 serves as a coordination point for Mg(2+).

The protein belongs to the phosphoglycerate kinase family. As to quaternary structure, monomer. It depends on Mg(2+) as a cofactor.

The protein resides in the cytoplasm. It is found in the mitochondrion. It catalyses the reaction (2R)-3-phosphoglycerate + ATP = (2R)-3-phospho-glyceroyl phosphate + ADP. The protein operates within carbohydrate degradation; glycolysis; pyruvate from D-glyceraldehyde 3-phosphate: step 2/5. Functionally, catalyzes one of the two ATP producing reactions in the glycolytic pathway via the reversible conversion of 1,3-diphosphoglycerate to 3-phosphoglycerate. Both L- and D- forms of purine and pyrimidine nucleotides can be used as substrates, but the activity is much lower on pyrimidines. Negatively regulates the biosynthesis of acetyl-CoA from pyruvate in the mitochondrion. The protein is Phosphoglycerate kinase (PGKA) of Penicillium citrinum.